The chain runs to 778 residues: Endonuclease MutS2 (778 aa).

Position 328-335 (328-335 (GPNTGGKT)) interacts with ATP. The 76-residue stretch at 702 to 777 (LDLRGKRYEE…GSGATIVTFK (76 aa)) folds into the Smr domain.

This sequence belongs to the DNA mismatch repair MutS family. MutS2 subfamily. As to quaternary structure, homodimer. Binds to stalled ribosomes, contacting rRNA.

Its function is as follows. Endonuclease that is involved in the suppression of homologous recombination and thus may have a key role in the control of bacterial genetic diversity. Acts as a ribosome collision sensor, splitting the ribosome into its 2 subunits. Detects stalled/collided 70S ribosomes which it binds and splits by an ATP-hydrolysis driven conformational change. Acts upstream of the ribosome quality control system (RQC), a ribosome-associated complex that mediates the extraction of incompletely synthesized nascent chains from stalled ribosomes and their subsequent degradation. Probably generates substrates for RQC. The sequence is that of Endonuclease MutS2 from Streptococcus pneumoniae (strain CGSP14).